A 339-amino-acid polypeptide reads, in one-letter code: Ketol-acid reductoisomerase (NADP(+)) (339 aa).

Residues 1–182 (MRVYYDRDAD…GGGRSGIIET (182 aa)) form the KARI N-terminal Rossmann domain. Residues 24-27 (YGSQ), Lys-48, Ser-51, Thr-53, and 83-86 (DELQ) each bind NADP(+). His-108 is a catalytic residue. Position 134 (Gly-134) interacts with NADP(+). Residues 183–328 (NFKEECETDL…AKLRAMMPWI (146 aa)) enclose the KARI C-terminal knotted domain. Residues Asp-191, Glu-195, Glu-227, and Glu-231 each coordinate Mg(2+). Ser-252 serves as a coordination point for substrate.

The protein belongs to the ketol-acid reductoisomerase family. Mg(2+) is required as a cofactor.

It carries out the reaction (2R)-2,3-dihydroxy-3-methylbutanoate + NADP(+) = (2S)-2-acetolactate + NADPH + H(+). It catalyses the reaction (2R,3R)-2,3-dihydroxy-3-methylpentanoate + NADP(+) = (S)-2-ethyl-2-hydroxy-3-oxobutanoate + NADPH + H(+). It participates in amino-acid biosynthesis; L-isoleucine biosynthesis; L-isoleucine from 2-oxobutanoate: step 2/4. Its pathway is amino-acid biosynthesis; L-valine biosynthesis; L-valine from pyruvate: step 2/4. In terms of biological role, involved in the biosynthesis of branched-chain amino acids (BCAA). Catalyzes an alkyl-migration followed by a ketol-acid reduction of (S)-2-acetolactate (S2AL) to yield (R)-2,3-dihydroxy-isovalerate. In the isomerase reaction, S2AL is rearranged via a Mg-dependent methyl migration to produce 3-hydroxy-3-methyl-2-ketobutyrate (HMKB). In the reductase reaction, this 2-ketoacid undergoes a metal-dependent reduction by NADPH to yield (R)-2,3-dihydroxy-isovalerate. This is Ketol-acid reductoisomerase (NADP(+)) from Rhizobium meliloti (strain 1021) (Ensifer meliloti).